Consider the following 376-residue polypeptide: 1-deoxy-D-xylulose 5-phosphate reductoisomerase (376 aa).

Serine 10, glycine 11, serine 12, valine 13, glycine 36, lysine 37, asparagine 38, and asparagine 118 together coordinate NADPH. Lysine 119 contacts 1-deoxy-D-xylulose 5-phosphate. Residue glutamate 120 participates in NADPH binding. Aspartate 144 is a binding site for Mn(2+). 1-deoxy-D-xylulose 5-phosphate is bound by residues serine 145, glutamate 146, serine 170, and histidine 193. Residue glutamate 146 coordinates Mn(2+). Glycine 199 lines the NADPH pocket. 1-deoxy-D-xylulose 5-phosphate is bound by residues serine 206, asparagine 211, lysine 212, and glutamate 215. Glutamate 215 provides a ligand contact to Mn(2+).

Belongs to the DXR family. It depends on Mg(2+) as a cofactor. Mn(2+) serves as cofactor.

It carries out the reaction 2-C-methyl-D-erythritol 4-phosphate + NADP(+) = 1-deoxy-D-xylulose 5-phosphate + NADPH + H(+). It functions in the pathway isoprenoid biosynthesis; isopentenyl diphosphate biosynthesis via DXP pathway; isopentenyl diphosphate from 1-deoxy-D-xylulose 5-phosphate: step 1/6. Catalyzes the NADPH-dependent rearrangement and reduction of 1-deoxy-D-xylulose-5-phosphate (DXP) to 2-C-methyl-D-erythritol 4-phosphate (MEP). The sequence is that of 1-deoxy-D-xylulose 5-phosphate reductoisomerase from Macrococcus caseolyticus (strain JCSC5402) (Macrococcoides caseolyticum).